Reading from the N-terminus, the 394-residue chain is Exodeoxyribonuclease 7 large subunit (394 aa).

The protein belongs to the XseA family. Heterooligomer composed of large and small subunits.

It localises to the cytoplasm. The enzyme catalyses Exonucleolytic cleavage in either 5'- to 3'- or 3'- to 5'-direction to yield nucleoside 5'-phosphates.. Functionally, bidirectionally degrades single-stranded DNA into large acid-insoluble oligonucleotides, which are then degraded further into small acid-soluble oligonucleotides. The polypeptide is Exodeoxyribonuclease 7 large subunit (Thermotoga maritima (strain ATCC 43589 / DSM 3109 / JCM 10099 / NBRC 100826 / MSB8)).